Here is a 329-residue protein sequence, read N- to C-terminus: Thioredoxin domain-containing protein 6 (329 aa).

The Thioredoxin domain maps to 11–115 (QVNINTQELW…QKTILQQLEA (105 aa)). The tract at residues 157-303 (GKTCTLGIIK…LFPSFKFSDK (147 aa)) is NDK. Residues 303 to 329 (KDKEAPPGAEAQTMVGPVEDPCMSERI) are disordered.

It belongs to the NDK family. In terms of assembly, monomer and homodimer. As to expression, expressed in lung airway epithelium (at protein level).

Its subcellular location is the cytoplasm. The protein localises to the cytoskeleton. The protein resides in the cilium axoneme. It localises to the dynein axonemal particle. May be a regulator of microtubule physiology. This chain is Thioredoxin domain-containing protein 6, found in Mus musculus (Mouse).